We begin with the raw amino-acid sequence, 161 residues long: Nucleotide-binding protein Tbd_1846 (161 aa).

It belongs to the YajQ family.

Functionally, nucleotide-binding protein. The chain is Nucleotide-binding protein Tbd_1846 from Thiobacillus denitrificans (strain ATCC 25259 / T1).